An 837-amino-acid polypeptide reads, in one-letter code: Protein kintoun (837 aa).

Disordered stretches follow at residues 100–119 (APSS…GSHW), 205–224 (LPGV…LPDF), 230–249 (YPAA…LQPA), and 363–515 (AAAP…GPGT). Residues 233 to 242 (APGPRAPSPP) show a composition bias toward pro residues. Basic and acidic residues predominate over residues 428–442 (GEERVPKPGEQDLSR). Positions 445 to 459 (GSPPGSVEEPSPGGE) are enriched in low complexity. Phosphoserine is present on residues serine 461 and serine 467. A compositionally biased stretch (basic and acidic residues) spans 484 to 498 (ESARGDSSVETREES). Serine 640, serine 641, and serine 773 each carry phosphoserine.

It belongs to the PIH1 family. Kintoun subfamily. Interacts with CFAP300. Interacts with DNAAF4. Interacts with DNAAF6/PIH1D3. Interacts with DNAI2 and HSPA1A.

The protein localises to the cytoplasm. It localises to the dynein axonemal particle. Functionally, required for cytoplasmic pre-assembly of axonemal dyneins, thereby playing a central role in motility in cilia and flagella. Involved in pre-assembly of dynein arm complexes in the cytoplasm before intraflagellar transport loads them for the ciliary compartment. In Homo sapiens (Human), this protein is Protein kintoun.